We begin with the raw amino-acid sequence, 220 residues long: UPF0502 protein VVA1225 (220 aa).

This sequence belongs to the UPF0502 family.

The chain is UPF0502 protein VVA1225 from Vibrio vulnificus (strain YJ016).